We begin with the raw amino-acid sequence, 327 residues long: Serine/threonine-protein phosphatase PP2A catalytic subunit (327 aa).

Positions 75, 77, 103, and 135 each coordinate Mn(2+). Histidine 136 (proton donor) is an active-site residue. Positions 185 and 259 each coordinate Mn(2+). Residue leucine 327 is modified to Leucine methyl ester.

This sequence belongs to the PPP phosphatase family. PP-2A subfamily. The cofactor is Mn(2+).

It catalyses the reaction O-phospho-L-seryl-[protein] + H2O = L-seryl-[protein] + phosphate. The catalysed reaction is O-phospho-L-threonyl-[protein] + H2O = L-threonyl-[protein] + phosphate. This chain is Serine/threonine-protein phosphatase PP2A catalytic subunit (pph-1), found in Neurospora crassa (strain ATCC 24698 / 74-OR23-1A / CBS 708.71 / DSM 1257 / FGSC 987).